A 265-amino-acid chain; its full sequence is Insulin-like growth factor-binding protein 5 (265 aa).

An N-terminal signal peptide occupies residues 1–21 (MEMLLPMCLLLVSLCLGQCQA). In terms of domain architecture, IGFBP N-terminal spans 24 to 104 (SFVHCEPCDD…LHGRGVCLNL (81 aa)). Intrachain disulfides connect Cys-28-Cys-54, Cys-31-Cys-56, Cys-39-Cys-57, Cys-46-Cys-60, Cys-68-Cys-81, and Cys-75-Cys-101. A compositionally biased stretch (basic and acidic residues) spans 111–121 (SKIDRESREED). The disordered stretch occupies residues 111–137 (SKIDRESREEDPTTSETEDIYQSKHRG). In terms of domain architecture, Thyroglobulin type-1 spans 182–256 (MGPCRRQVET…IDYVNGDLQC (75 aa)). 3 disulfides stabilise this stretch: Cys-185-Cys-212, Cys-223-Cys-234, and Cys-236-Cys-256.

It localises to the secreted. Functionally, IGF-binding proteins prolong the half-life of the IGFs and have been shown to either inhibit or stimulate the growth promoting effects of the IGFs on cell culture. They alter the interaction of IGFs with their cell surface receptors. Promotes anterior neural development by stimulating insulin growth factor (IGF) signaling via IGF receptors. This is Insulin-like growth factor-binding protein 5 from Xenopus laevis (African clawed frog).